Here is a 333-residue protein sequence, read N- to C-terminus: Ribosomal RNA large subunit methyltransferase F (333 aa).

Residues 1 to 10 (MPQPPKRPRK) are compositionally biased toward basic residues. The interval 1–31 (MPQPPKRPRKPAPAAVKTAPAKGELHPRNRH) is disordered. The segment covering 12 to 22 (APAAVKTAPAK) has biased composition (low complexity).

It belongs to the methyltransferase superfamily. METTL16/RlmF family.

Its subcellular location is the cytoplasm. The enzyme catalyses adenosine(1618) in 23S rRNA + S-adenosyl-L-methionine = N(6)-methyladenosine(1618) in 23S rRNA + S-adenosyl-L-homocysteine + H(+). Specifically methylates the adenine in position 1618 of 23S rRNA. The protein is Ribosomal RNA large subunit methyltransferase F of Ectopseudomonas mendocina (strain ymp) (Pseudomonas mendocina).